We begin with the raw amino-acid sequence, 591 residues long: Monoterpene synthase 8, chloroplastic (591 aa).

A chloroplast-targeting transit peptide spans 1–46 (MSLLLAPPSYFPFRGLRRSTAAKQPPCLRLVKCTADRQSPEAARRS). Residues Asp346, Asp350, and Glu497 each contribute to the Mg(2+) site. Positions 346-350 (DDVYD) match the DDXXD motif motif.

The protein belongs to the terpene synthase family. Tpsa subfamily. It depends on Mg(2+) as a cofactor. Mn(2+) is required as a cofactor. In terms of tissue distribution, highly expressed in flowers, petals and sepals, but almost undetectable in vegetative organs.

Its subcellular location is the plastid. It is found in the chloroplast. The enzyme catalyses (2E)-geranyl diphosphate + H2O = (R)-linalool + diphosphate. It carries out the reaction (2E)-geranyl diphosphate + H2O = (S)-linalool + diphosphate. It catalyses the reaction (2E,6E)-farnesyl diphosphate = (S)-beta-bisabolene + diphosphate. The catalysed reaction is (2E,6E)-farnesyl diphosphate = (E,R)-alpha-bisabolene + diphosphate. The enzyme catalyses (2E,6E)-farnesyl diphosphate = (E)-beta-farnesene + diphosphate. It carries out the reaction (2E,6E)-farnesyl diphosphate = beta-sesquiphellandrene + diphosphate. It catalyses the reaction (2E,6E)-farnesyl diphosphate = (1S,5S,6R)-alpha-bergamotene + diphosphate. It functions in the pathway secondary metabolite biosynthesis; terpenoid biosynthesis. Its function is as follows. Sesquiterpene and monoterpene synthase involved in the biosynthesis of volatile compounds present in floral scent. Mediates the conversion of (2E)-geranyl diphosphate (GPP) into linalool, with trace levels of myrcene, limonene and (Z)-beta-ocimene. Also acts as a sesquiterpene synthase by catalyzing the conversion of farnesyl diphosphate (FPP) to alpha-bergamotene and beta-bisabolene and to minor products including alpha-curcumene, cis-alpha-bisabolene, beta-farnesene and beta-sesquiphellandrene, as well as seven other unidentified sesquiterpenes. This is Monoterpene synthase 8, chloroplastic from Hedychium coronarium (White butterfly ginger-lily).